Reading from the N-terminus, the 403-residue chain is Pyruvate, phosphate dikinase regulatory protein 1, chloroplastic (403 aa).

Residues 1-86 constitute a chloroplast transit peptide; that stretch reads MALLSAMKLQ…NTTGPMRPIE (86 aa). Positions 1 to 108 are disordered; that stretch reads MALLSAMKLQ…DVSSSSNGVS (108 aa). Composition is skewed to low complexity over residues 17–26, 69–80, and 87–108; these read SSNLNPNSKP, STITNGSNNTTG, and SSSR…NGVS. 269–276 lines the ADP pocket; it reads GVSRTGKT.

This sequence belongs to the pyruvate, phosphate/water dikinase regulatory protein family. PDRP subfamily. In terms of assembly, interacts with PPDK1. As to expression, expressed in green tissues.

The protein localises to the plastid. It is found in the chloroplast stroma. It carries out the reaction N(tele)-phospho-L-histidyl/L-threonyl-[pyruvate, phosphate dikinase] + ADP = N(tele)-phospho-L-histidyl/O-phospho-L-threonyl-[pyruvate, phosphate dikinase] + AMP + H(+). The catalysed reaction is N(tele)-phospho-L-histidyl/O-phospho-L-threonyl-[pyruvate, phosphate dikinase] + phosphate + H(+) = N(tele)-phospho-L-histidyl/L-threonyl-[pyruvate, phosphate dikinase] + diphosphate. With respect to regulation, regulated by light/dark exposure. Functionally, bifunctional serine/threonine kinase and phosphorylase involved in the dark/light-mediated regulation of PPDK by catalyzing its phosphorylation/dephosphorylation. Dark/light-induced changes in stromal concentrations of the competing ADP and Pi substrates govern the direction of the reaction. In the dark, phosphorylates the catalytic intermediate of PPDK (PPDK-HisP), inactivating it. Light exposure induces the phosphorolysis reaction that reactivates PPDK. Unlike the kinase function which can utilize either Thr or Ser as target, the phosphorylase function has a strict substrate requirement for threonyl phosphate. This Arabidopsis thaliana (Mouse-ear cress) protein is Pyruvate, phosphate dikinase regulatory protein 1, chloroplastic (RP1).